A 378-amino-acid polypeptide reads, in one-letter code: uncharacterized protein (378 aa).

Over residues 1 to 11 the composition is skewed to basic residues; the sequence is MSPMNRQRKNK. The interval 1–23 is disordered; that stretch reads MSPMNRQRKNKSNVLNEKDERPG.

This is an uncharacterized protein from Caenorhabditis elegans.